A 252-amino-acid polypeptide reads, in one-letter code: Cilia- and flagella-associated protein 300 (252 aa).

It belongs to the CFAP300 family.

It is found in the cytoplasm. It localises to the cytoskeleton. The protein resides in the cilium axoneme. Cilium- and flagellum-specific protein that plays a role in axonemal structure organization and motility. Plays a role in outer and inner axonemal dynein arm assembly. This chain is Cilia- and flagella-associated protein 300, found in Paramecium tetraurelia.